Consider the following 110-residue polypeptide: Large ribosomal subunit protein uL24 (110 aa).

The protein belongs to the universal ribosomal protein uL24 family. In terms of assembly, part of the 50S ribosomal subunit.

Its function is as follows. One of two assembly initiator proteins, it binds directly to the 5'-end of the 23S rRNA, where it nucleates assembly of the 50S subunit. In terms of biological role, one of the proteins that surrounds the polypeptide exit tunnel on the outside of the subunit. The protein is Large ribosomal subunit protein uL24 of Chloroflexus aurantiacus (strain ATCC 29366 / DSM 635 / J-10-fl).